Here is a 502-residue protein sequence, read N- to C-terminus: MKIAVIGAGVTGLAAAARIASQGHEVTIFEKNNNVGGCMNQLKKDGFTFDMGPTIVMMPDVYKDVFTACGKNYEDYIELRQLRYIYDVYFDHDDRITVPTDLAELQQMLESIEPGSTHGFMSFLTDVYKKYEIARRYFLERTYRKPSDFYNMTSLVQGAKLKTLNHADQLIEHYIDNEKIQKLLAFQTLYIGIDPKRGPSLYSIIPMIEMMFGVHFIKGGMYGMAQGLAQLNKDLGVNIELNAEIEQIIIDPKFKRADAIKVNGDIRKFDKILCTADFPSVAESLMPDFAPIKKYPPHKIADLDYSCSAFLMYIGIDIDVTDQVRLHNVIFSDDFRGNIEEIFEGRLSYDPSIYVYVPAVADKSLAPEGKTGIYVLMPTPELKTGSGIDWSDEALTQQIKEIIYRKLATIEVFEDIKSHIVSETIFTPNDFEQTYHAKFGSAFGLMPTLAQSNYYRPQNVSRDYKDLYFAGASTHPGAGVPIVLTSAKITVDEMIKDIERGV.

An FAD-binding site is contributed by 5-17 (VIGAGVTGLAAAA).

The protein belongs to the carotenoid/retinoid oxidoreductase family. CrtN subfamily.

The enzyme catalyses 15-cis-4,4'-diapophytoene + 3 FAD + 3 H(+) = all-trans-4,4'-diaponeurosporene + 3 FADH2. The protein operates within carotenoid biosynthesis; staphyloxanthin biosynthesis; staphyloxanthin from farnesyl diphosphate: step 2/5. Involved in the biosynthesis of the yellow-orange carotenoid staphyloxanthin, which plays a role in the virulence via its protective function against oxidative stress. Catalyzes three successive dehydrogenation reactions that lead to the introduction of three double bonds into 4,4'-diapophytoene (dehydrosqualene), with 4,4'-diapophytofluene and 4,4'-diapo-zeta-carotene as intermediates, and 4,4'-diaponeurosporene (the major deep-yellow pigment in staphylococci strains) as the end product. The sequence is that of 4,4'-diapophytoene desaturase (4,4'-diaponeurosporene-forming) from Staphylococcus aureus (strain COL).